Here is a 178-residue protein sequence, read N- to C-terminus: Actin-related protein 2/3 complex subunit 3-A (178 aa).

This sequence belongs to the ARPC3 family. In terms of assembly, component of the Arp2/3 complex composed of actr2/arp2, actr3/arp3, arpc1 (arpc1a or arpc1b), arpc2, arpc3, arpc4 and arpc5.

The protein localises to the cytoplasm. Its subcellular location is the cytoskeleton. It localises to the cell projection. The protein resides in the nucleus. Functionally, component of the Arp2/3 complex, a multiprotein complex that mediates actin polymerization upon stimulation by nucleation-promoting factor (NPF). The Arp2/3 complex mediates the formation of branched actin networks in the cytoplasm, providing the force for cell motility. In addition to its role in the cytoplasmic cytoskeleton, the Arp2/3 complex also promotes actin polymerization in the nucleus, thereby regulating gene transcription and repair of damaged DNA. The Arp2/3 complex promotes homologous recombination (HR) repair in response to DNA damage by promoting nuclear actin polymerization, leading to drive motility of double-strand breaks (DSBs). This is Actin-related protein 2/3 complex subunit 3-A (arpc3-a) from Xenopus laevis (African clawed frog).